We begin with the raw amino-acid sequence, 299 residues long: Caspase-1 (299 aa).

Positions 1–28 (MLDGKQDNGNVDSVDIKQRTNGGGDEGD) are excised as a propeptide. The disordered stretch occupies residues 1–45 (MLDGKQDNGNVDSVDIKQRTNGGGDEGDALGSNSSSQPNRVARMP). Residues His136 and Cys178 contribute to the active site. The propeptide occupies 185-195 (GGITLSRTETD).

This sequence belongs to the peptidase C14A family. As to quaternary structure, heterotetramer that consists of two anti-parallel arranged heterodimers, each one formed by a 19/18 kDa (p19/18) and a 12 kDa (p12) subunit. Post-translationally, the two subunits are derived from the precursor sequence by an autocatalytic mechanism.

Functionally, involved in the activation cascade of caspases responsible for apoptosis execution. Inhibited by the baculovirus anti-apoptotic protein p35. Cleaves p35 and nuclear immunophilin FKBP46. This is Caspase-1 from Spodoptera frugiperda (Fall armyworm).